A 474-amino-acid polypeptide reads, in one-letter code: 3-isopropylmalate dehydratase large subunit (474 aa).

Positions 355, 415, and 418 each coordinate [4Fe-4S] cluster.

The protein belongs to the aconitase/IPM isomerase family. LeuC type 1 subfamily. In terms of assembly, heterodimer of LeuC and LeuD. [4Fe-4S] cluster is required as a cofactor.

The enzyme catalyses (2R,3S)-3-isopropylmalate = (2S)-2-isopropylmalate. It functions in the pathway amino-acid biosynthesis; L-leucine biosynthesis; L-leucine from 3-methyl-2-oxobutanoate: step 2/4. In terms of biological role, catalyzes the isomerization between 2-isopropylmalate and 3-isopropylmalate, via the formation of 2-isopropylmaleate. This is 3-isopropylmalate dehydratase large subunit from Shewanella oneidensis (strain ATCC 700550 / JCM 31522 / CIP 106686 / LMG 19005 / NCIMB 14063 / MR-1).